Reading from the N-terminus, the 114-residue chain is Turripeptide OL22 (114 aa).

Contains 6 disulfide bonds. As to expression, expressed by the venom duct.

Its subcellular location is the secreted. Acts as a neurotoxin by inhibiting an ion channel. This is Turripeptide OL22 from Iotyrris olangoensis (Sea snail).